A 1450-amino-acid polypeptide reads, in one-letter code: MEYEKSPTATTFSRKISNNRSHSLSFSANAVYDGVFSSPVNSKSPLVDYGEIFRGSGPSPSSIPFLDVPELNVGKVKVDVRSSKLDYSSVFGGLGACDFAVTPKEVIIKSEKKTSINEDKKRNRRKGGNSSDVPLCNEGKKSPEMVRMKHSDISYHQTVPRNENGATHLTQVPATMPGPIPTQVVDNTSLLHKIESKSTPIPAVEKKLPCNEGREEVKASRKQGSKTEVDFENIFARDGCSTRDDSTCKTVSNGEYRDVKPPSSFQCTLNGEHGASERLSGLNSGPSERYETEDADSPSSPPYFDAETDENSVAAESSAALKKAIEEAQIRMNIAKQMMEKKKSGFRSCAKLKSCDDSKIENKGNTKVEGITEESRDNNSQILGEMVKPSEQSFSNEGDQHAKRARKLWGVPEGLLKSTSDHKPEELEEQDIITLEEEQARRGRKHWELPGGIFKSVMNSKQQEPENLAPAKPEPDTKQEVQPITENPFYTFGQLGSKLKCVVEAFTGSKVSQKDEKQFTEKENSTVTQMVQDEESDSQEMLAGIPVIETYLREVEETPQQTESKSEMNIEEKSESTICAFTERSSQNMEKETGWQVKSACKFEDGSGVKDFQENGDHTCNVLDQEGEKEIVSEPQEMLVGPDDSKTYVREVEETPTPSLNKTQSDDSVGAMVSFNRVNISEPGNIDEVQEAVHKVPRRRRVWKTSEDVYNMIKAPKGNNRPWQLESAENETTAMSFHEEGVRIHHASEEIESTSGQASDSGLQENWTVLKQMFRQMFQTADTKGEDETYCLVESERGHLDIHQKAQEKYEQVEVETVRTNYEAYAHTRENEDESAQETYCRKEDGKVEVQGKTSLVRELIGEELEMASLEEEDVQEASEEAGWVQGLSELNEINEHADSHAEMLEYDRSETDSNNSRERFDQTQEQAEETMIDGSIDTDTSRSSFEMRQGDSYIEEVGIEQHRSDQFPEKASAVSNTEEHIEEIDSDSIQSGWSVVEDDDRSLQDGGASQAESKHDELEETKEESDEMKTSLGVERNGDKKELEHQFECQENETYRSNVEAAESSCRFPNGEEIIGAATNGNMKENEGEEGEESCRSSMEEEGDATSDIGAATDGNMKENEGEESCRSSMEEEGDATSDISQNKAETVEEHLKKIDETREKERERKQERVMVERAIREARERAFADAMERAGKTAMEKAKAVAHRREVPRKSEKGSVEVNDKLSSAEKASMQAKLRAERAAVERAITEVRERAMEKALSGKSAASQAKSYGGSKSFSSSGERRGSSSSGTENKSSGPSNSSNQTAKGEPIQRCKARSERHQRTSDRAAEALAEKKLRDLKTQKEQTERNRLAEALDADVKRWSSGKENNLRALISTLQYILGAESGWKPIPLTDLVSSASVRKAYRKATLYVHPDKLQQRGASTQQKYICEKVFDLLKEAWNKFGADER.

Disordered stretches follow at residues 117-142 (NEDKKRNRRKGGNSSDVPLCNEGKKS), 241-318 (STRD…AESS), 357-383 (DSKIENKGNTKVEGITEESRDNNSQIL), 459-480 (NSKQQEPENLAPAKPEPDTKQE), 512-541 (SQKDEKQFTEKENSTVTQMVQDEESDSQEM), 556-575 (EETPQQTESKSEMNIEEKSE), 908-946 (DRSETDSNNSRERFDQTQEQAEETMIDGSIDTDTSRSSF), 961-1046 (EQHR…ELEH), 1077-1168 (GAAT…ERKQ), 1192-1241 (AGKT…AERA), and 1254-1328 (AMEK…SDRA). Positions 316–344 (ESSAALKKAIEEAQIRMNIAKQMMEKKKS) form a coiled coil. The span at 357 to 366 (DSKIENKGNT) shows a compositional bias: basic and acidic residues. Basic and acidic residues-rich tracts occupy residues 512 to 524 (SQKDEKQFTEKEN), 564 to 575 (SKSEMNIEEKSE), 908 to 923 (DRSETDSNNSRERFDQ), 1037 to 1046 (RNGDKKELEH), 1117 to 1131 (NMKENEGEESCRSSM), 1147 to 1168 (ETVEEHLKKIDETREKERERKQ), and 1192 to 1226 (AGKTAMEKAKAVAHRREVPRKSEKGSVEVNDKLSS). 2 coiled-coil regions span residues 1142–1184 (SQNK…RERA) and 1219–1257 (EVNDKLSSAEKASMQAKLRAERAAVERAITEVRERAMEK). Over residues 1270 to 1299 (SYGGSKSFSSSGERRGSSSSGTENKSSGPS) the composition is skewed to low complexity. Residues 1310 to 1328 (PIQRCKARSERHQRTSDRA) are compositionally biased toward basic and acidic residues. Residues 1327-1355 (RAAEALAEKKLRDLKTQKEQTERNRLAEA) adopt a coiled-coil conformation. The 74-residue stretch at 1377-1450 (TLQYILGAES…AWNKFGADER (74 aa)) folds into the J domain.

In Arabidopsis thaliana (Mouse-ear cress), this protein is Auxilin-like protein 1 (AUL1).